The chain runs to 957 residues: Glycine dehydrogenase (decarboxylating) (957 aa).

Position 708 is an N6-(pyridoxal phosphate)lysine (K708).

This sequence belongs to the GcvP family. As to quaternary structure, the glycine cleavage system is composed of four proteins: P, T, L and H. The cofactor is pyridoxal 5'-phosphate.

It carries out the reaction N(6)-[(R)-lipoyl]-L-lysyl-[glycine-cleavage complex H protein] + glycine + H(+) = N(6)-[(R)-S(8)-aminomethyldihydrolipoyl]-L-lysyl-[glycine-cleavage complex H protein] + CO2. Its function is as follows. The glycine cleavage system catalyzes the degradation of glycine. The P protein binds the alpha-amino group of glycine through its pyridoxal phosphate cofactor; CO(2) is released and the remaining methylamine moiety is then transferred to the lipoamide cofactor of the H protein. The polypeptide is Glycine dehydrogenase (decarboxylating) (Salmonella paratyphi B (strain ATCC BAA-1250 / SPB7)).